A 287-amino-acid chain; its full sequence is MNKSIAPATSVVAGNVKFGNALPLSVIAGPCQLESRAHALEVASALKEIATRLGIGLVYKTSFDKANRTSAASARGLGLDAALPIFAEIRDHLGLPVLTDVHENEQCARAAEAVDILQIPAFLCRQTDLLLAAAATGRIVNVKKGQFLAPWDMGNVVSKITHAGNSKVLVTERGVSFGYNTLVSDMRALPIMAKTTGAPVIFDATHSVQQPGGKGTSSGGEREYVPVLARAAVAVGVAGVFIETHPDPDHAPSDGPNMVPLREFEALIKTLMEFDALAKKRSTVGAV.

Belongs to the KdsA family.

It localises to the cytoplasm. It carries out the reaction D-arabinose 5-phosphate + phosphoenolpyruvate + H2O = 3-deoxy-alpha-D-manno-2-octulosonate-8-phosphate + phosphate. Its pathway is carbohydrate biosynthesis; 3-deoxy-D-manno-octulosonate biosynthesis; 3-deoxy-D-manno-octulosonate from D-ribulose 5-phosphate: step 2/3. The protein operates within bacterial outer membrane biogenesis; lipopolysaccharide biosynthesis. The protein is 2-dehydro-3-deoxyphosphooctonate aldolase of Rhodopseudomonas palustris (strain ATCC BAA-98 / CGA009).